The following is a 1091-amino-acid chain: Rho GTPase-activating protein 7 (1091 aa).

Residues 11 to 78 (LTQIEAKEAC…LNKCAVMKLE (68 aa)) form the SAM domain. Serine 86, serine 89, and serine 320 each carry phosphoserine. The segment at 273–447 (QLNCVEISAL…RLSIYDNVPG (175 aa)) is focal adhesion-targeting (FAT). Disordered stretches follow at residues 292 to 327 (VRKR…RTRS), 382 to 439 (PKAL…SSRL), and 491 to 553 (SDEG…GVGA). Composition is skewed to low complexity over residues 297–323 (VSNS…SPVT) and 386–400 (SNGS…SSVN). The span at 414 to 425 (LRRENSSDSPKE) shows a compositional bias: basic and acidic residues. Residues 499–511 (ALDSVSPCPSSPK) are compositionally biased toward polar residues. A compositionally biased stretch (basic and acidic residues) spans 513-523 (IHLDVDNDRAT). The segment covering 526 to 535 (DLDSTGNSLN) has biased composition (polar residues). The segment at 614–636 (KHGFSWAVPKFMKRIKVPDYKDR) is polybasic cluster (PBR). In terms of domain architecture, Rho-GAP spans 641–847 (VPLTVNVQRT…HMIAECKKLF (207 aa)). One can recognise an START domain in the interval 877–1084 (RNDESADYQH…RDSFSNQNTE (208 aa)).

As to quaternary structure, interacts with EF1A1, facilitates EF1A1 distribution to the membrane periphery and ruffles upon growth factor stimulation and suppresses cell migration. Interacts with tensin TNS1 (via N-terminus); the interaction is decreased by phosphorylation of TNS1. Interacts with TNS3 and PTEN; in resting cells, interacts with TNS3 (via C2 tensin-type domain) but, following growth factor stimulation, TNS3 and PTEN are phosphorylated which leads to weakened interaction with TNS3 and enhanced interaction with PTEN. Interacts (via C-terminus) with tensin TNS4 (via SH2 domain); the interaction is independent of tyrosine phosphorylation of DLC1.

The protein localises to the cytoplasm. It is found in the cell junction. It localises to the focal adhesion. The protein resides in the membrane. Functions as a GTPase-activating protein for the small GTPases RHOA, RHOB, RHOC and CDC42, terminating their downstream signaling. This induces morphological changes and detachment through cytoskeletal reorganization, playing a critical role in biological processes such as cell migration and proliferation. Also functions in vivo as an activator of the phospholipase PLCD1. Active DLC1 increases cell migration velocity but reduces directionality. Required for growth factor-induced epithelial cell migration; in resting cells, interacts with TNS3 while PTEN interacts with the p85 regulatory subunit of the PI3K kinase complex but growth factor stimulation induces phosphorylation of TNS3 and PTEN, causing them to change their binding preference so that PTEN interacts with DLC1 and TNS3 interacts with p85. The PTEN-DLC1 complex translocates to the posterior of migrating cells to activate RHOA while the TNS3-p85 complex translocates to the leading edge of migrating cells to promote RAC1 activation. In Canis lupus familiaris (Dog), this protein is Rho GTPase-activating protein 7 (DLC1).